We begin with the raw amino-acid sequence, 239 residues long: Probable transcriptional regulatory protein BCAH187_A0615 (239 aa).

The protein belongs to the TACO1 family. YeeN subfamily.

The protein resides in the cytoplasm. The chain is Probable transcriptional regulatory protein BCAH187_A0615 from Bacillus cereus (strain AH187).